The chain runs to 217 residues: ATP synthase subunit 4, mitochondrial (217 aa).

A mitochondrion-targeting transit peptide spans 1 to 14 (MPFARVGALSARHY). A run of 2 helical transmembrane segments spans residues 41 to 61 (GVLATGVLGSIYAISNELYIV) and 66 to 86 (IVLGVFAAFVVVVAKLGGPGY).

As to quaternary structure, F-type ATP synthases have 2 components, the catalytic core F(1) and the membrane-embedded component F(0), linked together by a central stalk and a peripheral stalk. The central stalk, also called rotor shaft, is often seen as part of F(1). The peripheral stalk is seen as part of F(0). F(0) contains the membrane channel next to the rotor. F-type ATP synthases form dimers but each monomer functions independently in ATP generation. The dimer consists of 17 different polypeptides: ATP1 (subunit alpha, 3 molecules per monomer, part of F(1)), ATP2 (subunit beta, 3 copies per monomer, part of F(1)), ATP3 (subunit gamma, part of the central stalk), ATP4 (subunit b, part of the peripheral stalk), ATP5/OSCP (subunit 5/OSCP, part of the peripheral stalk), ATP6 (subunit a, part of the peripheral stalk), ATP7 (subunit d, part of the peripheral stalk), ATP8 (subunit 8, part of the peripheral stalk), OLI1 (subunit c, part of the rotor, 10 molecules per monomer), ATP14 (subunit h, part of the peripheral stalk), ATP15 (subunit epsilon, part of the central stalk), ATP16 (subunit delta, part of the central stalk), ATP17 (subunit f, part of the peripheral stalk), ATP18 (subunit i/j, part of the peripheral stalk), ATP19 (subunit k, dimer-specific, at interface between monomers), ATP20 (subunit g, at interface between monomers), TIM11 (subunit e, at interface between monomers).

The protein resides in the mitochondrion inner membrane. Its function is as follows. Mitochondrial membrane ATP synthase (F(1)F(0) ATP synthase or Complex V) produces ATP from ADP in the presence of a proton gradient across the membrane which is generated by electron transport complexes of the respiratory chain. F-type ATP synthases consist of two structural domains, F(1) - containing the extramembraneous catalytic core, and F(0) - containing the membrane proton channel, linked together by a central stalk and a peripheral stalk. During catalysis, ATP synthesis in the catalytic domain of F(1) is coupled via a rotary mechanism of the central stalk subunits to proton translocation. Part of the complex F(0) domain and the peripheral stalk, which acts as a stator to hold the catalytic alpha/ATP1(3)beta/ATP2(3) subcomplex and subunit a/ATP6 static relative to the rotary elements. This is ATP synthase subunit 4, mitochondrial from Yarrowia lipolytica (strain CLIB 122 / E 150) (Yeast).